A 2146-amino-acid polypeptide reads, in one-letter code: Phospholipid-transporting ATPase ABCA7 (2146 aa).

Residues 22-42 (PVQLLVELLWPLFLFFILVAV) traverse the membrane as a helical segment. Residues 43 to 549 (RHSHPPLEHH…DVFLRVLSRS (507 aa)) lie on the Extracellular side of the membrane. Cys75 and Cys225 form a disulfide bridge. N-linked (GlcNAc...) asparagine glycosylation is present at Asn312. 6 consecutive transmembrane segments (helical) span residues 550 to 570 (LPLF…KAVV), 593 to 613 (LGWF…LVLV), 626 to 646 (GVVF…SFLL), 655 to 675 (LAAA…VLCV), 687 to 707 (VAAS…LALL), and 727 to 747 (VFSL…YGLA). The ABC transporter 1 domain occupies 807-1038 (VSVRSLEKRF…LGSGYYLTLV (232 aa)). Residue 841–848 (GHNGAGKT) coordinates ATP. The chain crosses the membrane as a helical span at residues 849-869 (TTLSILSGLFPPSGGSAFILG). The segment covering 1048–1066 (EKADTDMEGSVDTRQEKKN) has biased composition (basic and acidic residues). Disordered stretches follow at residues 1048 to 1072 (EKAD…QGSR) and 1185 to 1209 (TALE…DAVG). A helical membrane pass occupies residues 1243–1263 (IVLPALFVGLALVFSLIVPPF). Topologically, residues 1264–1537 (GHYPALRLSP…ALMASSVDVL (274 aa)) are extracellular. An intrachain disulfide couples Cys1345 to Cys1359. 6 helical membrane passes run 1538 to 1558 (VSIC…LVLI), 1584 to 1604 (FLWD…IFLA), 1621 to 1641 (LLLL…SFFF), 1649 to 1669 (VVLT…TFVL), 1683 to 1703 (ILKQ…LIDM), and 1729 to 1749 (VVGK…LFTL). The region spanning 1793–2025 (LVLRNLTKVY…FAAGHTLTLR (233 aa)) is the ABC transporter 2 domain. Residue 1827 to 1834 (GVNGAGKT) coordinates ATP. The disordered stretch occupies residues 2104-2146 (QGKDEDTEEQKEAGVGVDPAPGLQHPKRVSQFLDDPSTAETVL).

This sequence belongs to the ABC transporter superfamily. ABCA family. Post-translationally, N-glycosylated. In terms of tissue distribution, expressed in leukocytes (at protein level). Widely expressed. Highly expressed in myelo-lymphatic tissues including peripheral leukocytes, thymus, spleen and bone marrow. Expressed in the hippocampus and the cerebellum. Isoform 2: Abundant in lymph node, spleen, thymus and trachea. Isoform 1: Strongly expressed in brain and bone marrow.

The protein resides in the cell membrane. The protein localises to the golgi apparatus membrane. It localises to the early endosome membrane. Its subcellular location is the cytoplasm. It is found in the cell projection. The protein resides in the ruffle membrane. The protein localises to the phagocytic cup. It localises to the endoplasmic reticulum. The enzyme catalyses ATP + H2O + phospholipidSide 1 = ADP + phosphate + phospholipidSide 2.. The catalysed reaction is a 1,2-diacyl-sn-glycero-3-phosphocholine(out) + ATP + H2O = a 1,2-diacyl-sn-glycero-3-phosphocholine(in) + ADP + phosphate + H(+). It catalyses the reaction a 1,2-diacyl-sn-glycero-3-phospho-L-serine(out) + ATP + H2O = a 1,2-diacyl-sn-glycero-3-phospho-L-serine(in) + ADP + phosphate + H(+). With respect to regulation, ATPase activity is decreased by cholesterol and ceramide. ATPase activity is stimulated by phosphatidylserine, phosphatidylcholine and sphingomyelin, but phosphatidylserine is more effective. Catalyzes the translocation of specific phospholipids from the cytoplasmic to the extracellular/lumenal leaflet of membrane coupled to the hydrolysis of ATP. Transports preferentially phosphatidylserine over phosphatidylcholine. Plays a role in lipid homeostasis and macrophage-mediated phagocytosis. Binds APOA1 and may function in apolipoprotein-mediated phospholipid efflux from cells. May also mediate cholesterol efflux. May regulate cellular ceramide homeostasis during keratinocyte differentiation. Involved in lipid raft organization and CD1D localization on thymocytes and antigen-presenting cells, which plays an important role in natural killer T-cell development and activation. Plays a role in phagocytosis of apoptotic cells by macrophages. Macrophage phagocytosis is stimulated by APOA1 or APOA2, probably by stabilization of ABCA7. Also involved in phagocytic clearance of amyloid-beta by microglia cells and macrophages. Further limits amyloid-beta production by playing a role in the regulation of amyloid-beta A4 precursor protein (APP) endocytosis and/or processing. Amyloid-beta is the main component of amyloid plaques found in the brains of Alzheimer patients. The sequence is that of Phospholipid-transporting ATPase ABCA7 from Homo sapiens (Human).